The following is an 84-amino-acid chain: Small ribosomal subunit protein bS18 (84 aa).

Belongs to the bacterial ribosomal protein bS18 family. As to quaternary structure, part of the 30S ribosomal subunit. Forms a tight heterodimer with protein bS6.

Binds as a heterodimer with protein bS6 to the central domain of the 16S rRNA, where it helps stabilize the platform of the 30S subunit. The chain is Small ribosomal subunit protein bS18 from Dictyoglomus turgidum (strain DSM 6724 / Z-1310).